Consider the following 217-residue polypeptide: Tegument protein BKRF4 (217 aa).

Residues 1–217 (MAMFLKSRGV…GNNNYNWPWL (217 aa)) are disordered. Positions 32–42 (YTLGSQASQSI) are enriched in polar residues. Acidic residues predominate over residues 43–79 (QEEDVSDTDESDYSDEDEEIDLEEEYPSDEDPSEGSD). Residues 63–64 (DL) are interaction with host histones H3/H4. Residues 81–84 (DPSW) are interaction with host H2A/H2B. The segment covering 89 to 102 (SDESDYSESDEDEA) has biased composition (acidic residues). Residues 106-132 (SQASRSSRVSPSTQQSSGLTPTPSFSR) show a composition bias toward low complexity. A compositionally biased stretch (pro residues) spans 136–145 (RAPPRPPAPA). A compositionally biased stretch (polar residues) spans 208-217 (GNNNYNWPWL).

Belongs to the lymphocryptovirus BKRF4 family. Forms a complex with the host H3/H4 dimer and histone chaperone ASF1. Also forms a complex with host H2A/H2B dimer. Interacts (via C-terminus) with BGLF2; this interaction is important for infectious virion production.

It is found in the virion tegument. Its subcellular location is the host nucleus. It localises to the host cytoplasm. The protein resides in the host perinuclear region. Functionally, histone-binding protein that binds to histones H2A/H2B, H3/H4 and cellular chromatin to overcome the host DNA damage response triggered by the viral genome ends. Interferes with histone ubiquitination and recruitment of repair proteins. In Epstein-Barr virus (strain AG876) (HHV-4), this protein is Tegument protein BKRF4.